The following is a 758-amino-acid chain: Probable TonB-dependent receptor NMB0964 (758 aa).

The N-terminal stretch at 1–24 (MAQTTLKPIVLSILLINTPLLAQA) is a signal peptide. The region spanning 50–161 (LLHTSTASDK…VAGLVDVADG (112 aa)) is the TBDR plug domain. One can recognise a TBDR beta-barrel domain in the interval 171 to 758 (GVSGELGLRL…SFTGGVNVKF (588 aa)). Positions 741–758 (SDTPQMGRSFTGGVNVKF) match the TonB C-terminal box motif.

Belongs to the TonB-dependent receptor family.

Its subcellular location is the cell outer membrane. Its function is as follows. Probable receptor, TonB-dependent. The protein is Probable TonB-dependent receptor NMB0964 of Neisseria meningitidis serogroup B (strain ATCC BAA-335 / MC58).